Here is a 216-residue protein sequence, read N- to C-terminus: Glycerol-3-phosphate acyltransferase (216 aa).

Helical transmembrane passes span 11-31, 62-82, 95-115, 132-152, and 171-191; these read LVLGVCALAGYLLGSVPFGLV, LALATLVLDSGKGAIAALVAS, VLAGLLAGGMAVVGHNFPIWL, ATAWPVGLAACATWLVVAALF, and LVLATPAHAAVFALLALLAWI.

The protein belongs to the PlsY family. Probably interacts with PlsX.

It localises to the cell inner membrane. It catalyses the reaction an acyl phosphate + sn-glycerol 3-phosphate = a 1-acyl-sn-glycero-3-phosphate + phosphate. It participates in lipid metabolism; phospholipid metabolism. In terms of biological role, catalyzes the transfer of an acyl group from acyl-phosphate (acyl-PO(4)) to glycerol-3-phosphate (G3P) to form lysophosphatidic acid (LPA). This enzyme utilizes acyl-phosphate as fatty acyl donor, but not acyl-CoA or acyl-ACP. The sequence is that of Glycerol-3-phosphate acyltransferase from Rhodospirillum rubrum (strain ATCC 11170 / ATH 1.1.1 / DSM 467 / LMG 4362 / NCIMB 8255 / S1).